The following is a 64-amino-acid chain: Large ribosomal subunit protein bL33 (64 aa).

Belongs to the bacterial ribosomal protein bL33 family.

The sequence is that of Large ribosomal subunit protein bL33 from Parasynechococcus marenigrum (strain WH8102).